We begin with the raw amino-acid sequence, 1312 residues long: Cyclic GMP-binding protein D (1312 aa).

The N-terminal Ras-GEF domain occupies 26–155 (GFSAIKSCSL…EFFKAKKMAR (130 aa)). Composition is skewed to low complexity over residues 206–236 (NTMN…SSPN) and 275–296 (NGTS…LFNQ). 2 disordered regions span residues 206–244 (NTMN…RSSM) and 260–326 (NFNN…NNVN). Residues 297 to 310 (QPSLSMLNDDGSVQ) are compositionally biased toward polar residues. The span at 311–326 (NNNNNNNNNNNNNNVN) shows a compositional bias: low complexity. Positions 353–582 (LPEAIAKELT…FRLSKIREET (230 aa)) constitute a Ras-GEF domain. Residues 586–658 (QSLKESNGIG…NCGNGSGISS (73 aa)) form a disordered region. Residues 591 to 612 (SNGIGNSNSTSGGSSSSLVNKD) show a composition bias toward low complexity. A compositionally biased stretch (gly residues) spans 613–625 (GSGGGGGSGGGGS). The segment covering 630–644 (GDGKGDGKDNRDGRG) has biased composition (basic and acidic residues). Residues 646 to 657 (GNSNCGNGSGIS) show a composition bias toward low complexity. Position 698 to 857 (698 to 857 (VSSTLSEREW…ATFYKFIGVI (160 aa))) interacts with a nucleoside 3',5'-cyclic phosphate. The 67-residue stretch at 940–1006 (SSFRTKFGLS…DKILTVDKNI (67 aa)) folds into the GRAM domain. Residues 1059–1087 (QQQQPSQQPSQQQSQSSQLQQSVSASSTT) show a composition bias toward low complexity. Disordered regions lie at residues 1059–1108 (QQQQ…IKDL) and 1167–1210 (NNIN…NSSI). A nucleoside 3',5'-cyclic phosphate contacts are provided by residues 1105–1218 (IKDL…SNTS) and 1182–1303 (NNNN…LACV).

In terms of biological role, promotes the exchange of Ras-bound GDP by GTP. Induces the formation of substrate-attached pseudopodia, that leads to increased adhesion and thereby negatively influencing cell speed and polarity. The polypeptide is Cyclic GMP-binding protein D (gbpD) (Dictyostelium discoideum (Social amoeba)).